The sequence spans 396 residues: Phosphoglycerate kinase (396 aa).

Substrate-binding positions include 21-23, arginine 36, 59-62, arginine 118, and arginine 151; these read DLN and HFGR. Residues lysine 201, glutamate 323, and 353-356 contribute to the ATP site; that span reads GGDT.

Belongs to the phosphoglycerate kinase family. Monomer.

Its subcellular location is the cytoplasm. It carries out the reaction (2R)-3-phosphoglycerate + ATP = (2R)-3-phospho-glyceroyl phosphate + ADP. The protein operates within carbohydrate degradation; glycolysis; pyruvate from D-glyceraldehyde 3-phosphate: step 2/5. The protein is Phosphoglycerate kinase of Brucella abortus biovar 1 (strain 9-941).